The primary structure comprises 222 residues: 7-cyano-7-deazaguanine synthase (222 aa).

Residue 14 to 24 coordinates ATP; the sequence is FSGGQDSTTCL. 4 residues coordinate Zn(2+): C192, C201, C204, and C207.

Belongs to the QueC family. As to quaternary structure, homodimer. The cofactor is Zn(2+).

The catalysed reaction is 7-carboxy-7-deazaguanine + NH4(+) + ATP = 7-cyano-7-deazaguanine + ADP + phosphate + H2O + H(+). The protein operates within purine metabolism; 7-cyano-7-deazaguanine biosynthesis. In terms of biological role, catalyzes the ATP-dependent conversion of 7-carboxy-7-deazaguanine (CDG) to 7-cyano-7-deazaguanine (preQ(0)). The polypeptide is 7-cyano-7-deazaguanine synthase (Clostridium acetobutylicum (strain ATCC 824 / DSM 792 / JCM 1419 / IAM 19013 / LMG 5710 / NBRC 13948 / NRRL B-527 / VKM B-1787 / 2291 / W)).